Here is a 262-residue protein sequence, read N- to C-terminus: Small ribosomal subunit protein uS2 (262 aa).

Residues 240 to 262 (NLDEKEESQEAESTEENTTVESN) form a disordered region. Residues 243-254 (EKEESQEAESTE) show a composition bias toward acidic residues.

It belongs to the universal ribosomal protein uS2 family.

In Staphylococcus haemolyticus (strain JCSC1435), this protein is Small ribosomal subunit protein uS2.